We begin with the raw amino-acid sequence, 274 residues long: tRNA-cytidine(32) 2-sulfurtransferase (274 aa).

The PP-loop motif motif lies at 40–45 (SGGKDS). [4Fe-4S] cluster is bound by residues Cys-115, Cys-118, and Cys-206.

This sequence belongs to the TtcA family. Homodimer. Mg(2+) is required as a cofactor. The cofactor is [4Fe-4S] cluster.

The protein localises to the cytoplasm. The enzyme catalyses cytidine(32) in tRNA + S-sulfanyl-L-cysteinyl-[cysteine desulfurase] + AH2 + ATP = 2-thiocytidine(32) in tRNA + L-cysteinyl-[cysteine desulfurase] + A + AMP + diphosphate + H(+). It participates in tRNA modification. In terms of biological role, catalyzes the ATP-dependent 2-thiolation of cytidine in position 32 of tRNA, to form 2-thiocytidine (s(2)C32). The sulfur atoms are provided by the cysteine/cysteine desulfurase (IscS) system. This Pseudomonas paraeruginosa (strain DSM 24068 / PA7) (Pseudomonas aeruginosa (strain PA7)) protein is tRNA-cytidine(32) 2-sulfurtransferase.